Consider the following 168-residue polypeptide: Large ribosomal subunit protein uL10 (168 aa).

This sequence belongs to the universal ribosomal protein uL10 family. Part of the ribosomal stalk of the 50S ribosomal subunit. The N-terminus interacts with L11 and the large rRNA to form the base of the stalk. The C-terminus forms an elongated spine to which L12 dimers bind in a sequential fashion forming a multimeric L10(L12)X complex.

Forms part of the ribosomal stalk, playing a central role in the interaction of the ribosome with GTP-bound translation factors. This chain is Large ribosomal subunit protein uL10, found in Pediococcus pentosaceus (strain ATCC 25745 / CCUG 21536 / LMG 10740 / 183-1w).